We begin with the raw amino-acid sequence, 193 residues long: MRNVFVGALCMCGMSFVFSDSVRSAAAAYFSHFSWVMPERVVQEHISWRYKALKQDHMEVDCDVYAYRGGRVFPRVSGMGVIDHTNIPHALRIFCEKMTDSFMKKKIDPHLCQRERKFLPHYFSFRMGKLPRICAVVFAQPNVMQGNFLTVHFKLNVENEDSRIIEVTVAKEQENWKLFQFLFKEDRAHLAVL.

The first 26 residues, 1–26 (MRNVFVGALCMCGMSFVFSDSVRSAA), serve as a signal peptide directing secretion.

This is an uncharacterized protein from Treponema pallidum (strain Nichols).